We begin with the raw amino-acid sequence, 138 residues long: Secreted RxLR effector protein 51 (138 aa).

Residues 1-19 (MRSSTILFVLGVAMVAVNG) form the signal peptide. The RxLR-dEER signature appears at 38–53 (RLLRSNSGKHKTDEER). N101 carries an N-linked (GlcNAc...) asparagine glycan.

This sequence belongs to the RxLR effector family.

It is found in the secreted. It localises to the host nucleus. Secreted effector that completely suppresses the host cell death induced by cell death-inducing proteins. The sequence is that of Secreted RxLR effector protein 51 from Plasmopara viticola (Downy mildew of grapevine).